A 275-amino-acid chain; its full sequence is Chlorobenzene dihydrodiol dehydrogenase (275 aa).

Residue Tyr-155 is the Proton acceptor of the active site.

This sequence belongs to the short-chain dehydrogenases/reductases (SDR) family.

The catalysed reaction is (1R,2R)-3-chlorocyclohexa-3,5-diene-1,2-diol + NAD(+) = 3-chlorocatechol + NADH + H(+). It functions in the pathway aromatic compound metabolism. Can transform various dihydrodiols of chlorobenzenes and chlorotoluenes into the respective catechols. This is Chlorobenzene dihydrodiol dehydrogenase from Cupriavidus sp. (strain PS12).